The chain runs to 365 residues: F-box protein At1g48060 (365 aa).

The segment at 1-20 (MKPQEEEEKNENMARKRSKS) is disordered. Residues 20–69 (SSSSLSIPLDIATDIFLRLPAKSVVRFSCVAKHWSSITTAPYFTNSFETR) enclose the F-box domain.

This chain is F-box protein At1g48060, found in Arabidopsis thaliana (Mouse-ear cress).